The sequence spans 148 residues: Large ribosomal subunit protein bL9 (148 aa).

The protein belongs to the bacterial ribosomal protein bL9 family.

Functionally, binds to the 23S rRNA. The protein is Large ribosomal subunit protein bL9 of Pelotomaculum thermopropionicum (strain DSM 13744 / JCM 10971 / SI).